The following is a 77-amino-acid chain: Large ribosomal subunit protein eL14 (77 aa).

This sequence belongs to the eukaryotic ribosomal protein eL14 family.

The polypeptide is Large ribosomal subunit protein eL14 (Methanococcus maripaludis (strain C5 / ATCC BAA-1333)).